The chain runs to 257 residues: Probable enoyl-CoA hydratase echA17 (257 aa).

Belongs to the enoyl-CoA hydratase/isomerase family.

The enzyme catalyses a (3S)-3-hydroxyacyl-CoA = a (2E)-enoyl-CoA + H2O. The catalysed reaction is a 4-saturated-(3S)-3-hydroxyacyl-CoA = a (3E)-enoyl-CoA + H2O. Functionally, could possibly oxidize fatty acids using specific components. This is Probable enoyl-CoA hydratase echA17 (echA17) from Mycobacterium avium (strain 104).